The chain runs to 396 residues: NASP-related protein sim3 (396 aa).

Residues 1-31 form a disordered region; it reads MSSDTKTLENSKGNSATDADTKNPSSSDSRA. 2 TPR repeats span residues 32 to 65 and 89 to 122; these read IEQL…SESI and IENS…GSFT. The interval 135-164 is disordered; it reads NEENSSIAHPEKESEEKETNEASPASEEDE. Residues 143–154 show a composition bias toward basic and acidic residues; that stretch reads HPEKESEEKETN. The stretch at 199 to 232 is one TPR 3 repeat; that stretch reads ADIYDLLGELSLEIENFSQASQDLKTALEWKEKV. Residues 267–329 are a coiled coil; the sequence is CEHVEKAAEI…QKTLDLKHGA (63 aa). A compositionally biased stretch (basic and acidic residues) spans 284-301; the sequence is RENEVTDKKGKGKQKAEE. Disordered regions lie at residues 284–307 and 334–396; these read RENE…LTSD and EAVM…KKKD. Residues 343 to 353 show a composition bias toward low complexity; that stretch reads SSLLSKDSSSL.

This sequence belongs to the NASP family. In terms of assembly, interacts with cnp1, hht1, hht2 and hht3; has a preference for CENP-A (cnp1) over histone H3 (hht1/2/3).

It localises to the nucleus. Its function is as follows. Histone H3 and H3-like CENP-A-specific chaperone. Promotes delivery and incorporation of CENP-A in centromeric chromatin, probably by escorting nascent CENP-A to CENP-A chromatin assembly factors. Required for central core silencing and normal chromosome segregation. The chain is NASP-related protein sim3 (sim3) from Schizosaccharomyces pombe (strain 972 / ATCC 24843) (Fission yeast).